The primary structure comprises 1170 residues: Thrombospondin-1 (1170 aa).

The first 18 residues, Met1–Ser18, serve as a signal peptide directing secretion. Residues Arg47–Arg95 form a heparin-binding region. The Laminin G-like domain maps to Asn65–Cys270. Cys171 and Cys232 are joined by a disulfide. 2 N-linked (GlcNAc...) asparagine glycosylation sites follow: Asn248 and Asn360. Residues Pro316–Trp373 form the VWFC domain. 3 TSP type-1 domains span residues Asp379–Asp429, Asp435–Pro490, and Asn492–Pro547. Cystine bridges form between Cys391/Cys423, Cys395/Cys428, Cys406/Cys413, Cys447/Cys484, Cys451/Cys489, Cys462/Cys474, Cys504/Cys541, Cys508/Cys546, Cys519/Cys531, Cys551/Cys562, Cys556/Cys572, Cys575/Cys586, Cys592/Cys608, Cys599/Cys617, Cys620/Cys644, Cys650/Cys663, Cys657/Cys676, Cys678/Cys689, Cys705/Cys713, Cys718/Cys738, Cys754/Cys774, Cys777/Cys797, Cys813/Cys833, Cys836/Cys856, Cys874/Cys894, Cys910/Cys930, and Cys946/Cys1167. The 41-residue stretch at Pro547–Lys587 folds into the EGF-like 1 domain. The O-linked (Xyl) serine glycan is linked to Ser553. An EGF-like 2 domain is found at Pro646–Gly690. 8 TSP type-3 repeats span residues Glu691–Gln726, Glu727–Gln762, Tyr763–Gln785, Ala786–Gln821, Lys822–Gln844, Leu845–Gln882, Ala883–Gln918, and Lys919–Glu954. An N-linked (GlcNAc...) asparagine glycan is attached at Asn708. The tract at residues Glu839–Asp944 is disordered. Composition is skewed to basic and acidic residues over residues His840–Asp854, Ala883–Cys894, and Asp917–Asp941. The Cell attachment site motif lies at Arg926 to Asp928. In terms of domain architecture, TSP C-terminal spans Arg958–Ser1170. 2 N-linked (GlcNAc...) asparagine glycosylation sites follow: Asn1067 and Asn1085.

Belongs to the thrombospondin family. Homotrimer; disulfide-linked. Can bind to fibrinogen, fibronectin, laminin, type V collagen and integrins alpha-V/beta-1, alpha-V/beta-3 and alpha-IIb/beta-3. Binds heparin. Interacts (via the C-terminal domain) with CD47. Interacts (via the TSP type I repeats) with CD36; the interaction conveys an antiangiogenic effect. Interacts (via the TSP type I repeats) with HRG; the interaction blocks the antiangiogenic effect of THBS1 with CD36. Interacts with ATF6 (via lumenal domain). Interacts with FN1; this interaction is enhanced by TNFAIP6, which may act as a bridging molecule between FN1 and THBS1. Interacts with SIRPA; the interaction stimulates phosphorylation of SIRPA. Odontoblasts.

It is found in the secreted. The protein localises to the cell surface. The protein resides in the extracellular space. Its subcellular location is the extracellular matrix. It localises to the endoplasmic reticulum. It is found in the sarcoplasmic reticulum. Its function is as follows. Adhesive glycoprotein that mediates cell-to-cell and cell-to-matrix interactions. Multifunctional, involved in inflammation, angiogenesis, wound healing, reactive oxygen species (ROS) signaling, nitrous oxide (NO) signaling, apoptosis, senescence, aging, cellular self-renewal, stemness, and cardiovascular and metabolic homeostasis. Negatively modulates dendritic cell activation and cytokine release, as part of an autocrine feedback loop, contributing to the resolution of inflammation and immune homeostasis. Ligand for receptor CD47. Modulates nitrous oxide (NO) signaling via CD47, hence playing a role as a pressor agent, supporting blood pressure. Plays a role in endothelial cell senescence, acting via CD47, by increasing the abundance and activation of NADPH oxidase NOX1, and so generating excess ROS. Inhibits stem cell self-renewal, acting via CD47 signaling, probably by regulation of the stem cell transcription factors POU5F1/OCT4, SOX2, MYC/c-Myc and KLF4. Negatively modulates wound healing, acting via CD47. Ligand for receptor CD36. Involved in inducing apoptosis in podocytes in response to elevated free fatty acids, acting via CD36. Plays a role in suppressing angiogenesis, acting, depending on context, via CD36 or CD47. Promotes cellular senescence in a TP53-CDKN1A-RB1 signaling-dependent manner. Ligand for immunoglobulin-like cell surface receptor SIRPA. Involved in ROS signaling in non-phagocytic cells, stimulating NADPH oxidase-derived ROS production, acting via interaction with SIRPA. Plays a role in metabolic dysfunction in diet-induced obesity, perhaps acting by exacerbating adipose inflammatory activity; its effects may be mediated, at least in part, through enhanced adipocyte proliferation. Plays a role in ER stress response, via its interaction with the activating transcription factor 6 alpha (ATF6) which produces adaptive ER stress response factors. May be involved in age-related conditions, including metabolic dysregulation, during normal aging. This Bos taurus (Bovine) protein is Thrombospondin-1 (THBS1).